Here is a 420-residue protein sequence, read N- to C-terminus: MATVVREAFENHVKLVESRNSPGHVLASSEASFFVADLNDIVRKWAAWKKALPDVTPFFAVKSSYDRRLIQTLATCGAGFDCASVEEIELILSLGIGAERIVFTHPCKPVSSLGLCRKLGITLITFDNECELRKLHHHYPEAQTVLRVFADDPTNADPLGTKFGAAREDIDGLVRLVKELNMKLAGASFHAAPSVAVDAAAYVRGIRDAAEVFARARRVGLNPTVLDIGGGYTDSTFQQIAGAVRPAIAECFKSQVVEGRLRILAEPGTLFSCSPFYLAVKVVARRRNAAAFGNEPATRLYINDGIYSNFMMRFIVNMTFSPVAVIRKGVWYDQTEQTMRREACSLWGRSCDSNDCINRDCRLDPEVGVGDWLVFKDMGAYTTVCNTTFNGFTSSNHTIYIEPTQVDKAQSTFEQLELAI.

An N6-(pyridoxal phosphate)lysine modification is found at Lys-62. Pyridoxal 5'-phosphate is bound by residues Ser-194, Gly-231, and 266 to 269; that span reads EPGT. 315 to 316 is a substrate binding site; it reads IV. The active-site Proton donor; shared with dimeric partner is the Cys-351. Cys-351 is modified (S-nitrosocysteine). Asp-352 is a substrate binding site. Position 381 (Tyr-381) interacts with pyridoxal 5'-phosphate.

This sequence belongs to the Orn/Lys/Arg decarboxylase class-II family. As to quaternary structure, homodimer. Pyridoxal 5'-phosphate is required as a cofactor.

The protein operates within alkaloid biosynthesis. Amino acid decarboxylase; part of the gene cluster that mediates the biosynthesis of loline alkaloids, potent insecticidal agents composed of a pyrrolizidine ring system and an uncommon ether bridge linking carbons 2 and 7. Lolines are structurally differentiated by the various modifications of the L-amino group and include norloline, loline, N-methylloline, N-acetylloline, N-acetylnorloline, and N-formylloline. The first committed step is the condensation of O-acetyl-L-homoserine (derived from L-aspartic acid) and L-proline, probably catalyzed by the gamma-type pyridoxal 5'-phosphate(PLP)-dependent enzyme lolC, to give the diamino diacid, NACPP. Ensuing cyclization, decarboxylation, and acetylation steps yield 1-exo-acetamidopyrrolizidine (AcAP). LolO is required for installation of the ether bridge upon the pathway intermediate, 1-exo-acetamidopyrrolizidine (AcAP). In sequential 2-oxoglutarate- and O(2)-consuming steps, lolO removes hydrogens from C2 and C7 of AcAP to form both carbon-oxygen bonds in N-acetylnorloline (NANL), the precursor to all other lolines. The enzymes lolD, lolE, lolF and lolT have also been proposed to be involved in the ether-bridge installation. Further processing of the exocyclic moiety of NANL by fungal N-acetamidase (LolN), methyltransferase (LolM), and cytochrome P450 (LolP) enzymes, with occasional involvement of a plant acetyltransferase, generates the other known lolines. LolN transforms NANL to norlonine which is monomethylated and dimethylated to respectively lonine and N-methyllonine (NML) by lolM. LolP catalyzes hydroxylation of the methyl group in N-methylloline (NML) and further oxygenation to N-formylloline (NFL). A plant acetyltransferase is responsible for the acetylation of loline to form N-acetylloline (NAL). LolA might interact with aspartate kinase to prevent feedback inhibition of its activity by these end products and thereby promote production of L-homoserine from L-aspartate. The sequence is that of Amino acid decarboxylase lolD1 from Epichloe uncinata (Endophyte fungus).